The primary structure comprises 178 residues: MDLLLLLFSAIWYILPAYVANAVPCILGGGKPVDFGKTFFDGNRIIGNGVTYRGTFFGILFGIITGILQHFIVILYMGPETVFDYGLFGYIILSFLLASGTLFGDMLGSFIKRRFKLNQGQSAPILDQITFIVFALLFAYPFYPLATNSIVLLLVISPIIHFSSNIIAYKLHLKKVWW.

A run of 5 helical transmembrane segments spans residues 3–23, 56–76, 87–107, 123–145, and 150–169; these read LLLL…ANAV, FFGI…VILY, LFGY…GDML, APIL…FYPL, and IVLL…IIAY.

This sequence belongs to the CDP-archaeol synthase family. It depends on Mg(2+) as a cofactor.

The protein localises to the cell membrane. The enzyme catalyses 2,3-bis-O-(geranylgeranyl)-sn-glycerol 1-phosphate + CTP + H(+) = CDP-2,3-bis-O-(geranylgeranyl)-sn-glycerol + diphosphate. It functions in the pathway membrane lipid metabolism; glycerophospholipid metabolism. In terms of biological role, catalyzes the formation of CDP-2,3-bis-(O-geranylgeranyl)-sn-glycerol (CDP-archaeol) from 2,3-bis-(O-geranylgeranyl)-sn-glycerol 1-phosphate (DGGGP) and CTP. This reaction is the third ether-bond-formation step in the biosynthesis of archaeal membrane lipids. In Methanococcus maripaludis (strain C6 / ATCC BAA-1332), this protein is CDP-archaeol synthase.